Consider the following 293-residue polypeptide: Methylsterol monooxygenase 1 (293 aa).

2 helical membrane passes run 55–75 and 100–120; these read LIVH…FQFI and VLLF…YYFT. The Fatty acid hydroxylase domain maps to 145 to 274; that stretch reads CAVIEDTWHY…FTWWDRIFGT (130 aa). Positions 157–161 match the Histidine box-1 motif; it reads HRLLH. The Histidine box-2 signature appears at 170–174; that stretch reads HKVHH. Residues 199–219 traverse the membrane as a helical segment; sequence FFIGIVLLCDHVILLWAWVTI. A Histidine box-3 motif is present at residues 249–255; the sequence is HHDFHHM.

Belongs to the sterol desaturase family. It depends on Fe cation as a cofactor. Ubiquitinated by MARCHF6, leading to proteasomal degradation.

Its subcellular location is the endoplasmic reticulum membrane. It carries out the reaction 4,4-dimethyl-5alpha-cholest-7-en-3beta-ol + 6 Fe(II)-[cytochrome b5] + 3 O2 + 5 H(+) = 4alpha-carboxy-4beta-methyl-5alpha-cholest-7-ene-3beta-ol + 6 Fe(III)-[cytochrome b5] + 4 H2O. The catalysed reaction is 4,4-dimethyl-5alpha-cholesta-8,24-dien-3beta-ol + 6 Fe(II)-[cytochrome b5] + 3 O2 + 5 H(+) = 4beta-methylzymosterol-4alpha-carboxylate + 6 Fe(III)-[cytochrome b5] + 4 H2O. The enzyme catalyses 4alpha-methylzymosterol + 6 Fe(II)-[cytochrome b5] + 3 O2 + 5 H(+) = 4alpha-carboxyzymosterol + 6 Fe(III)-[cytochrome b5] + 4 H2O. It catalyses the reaction 4alpha-methyl-5alpha-cholest-7-en-3beta-ol + 6 Fe(II)-[cytochrome b5] + 3 O2 + 5 H(+) = 4alpha-carboxy-5alpha-cholest-7-en-3beta-ol + 6 Fe(III)-[cytochrome b5] + 4 H2O. It carries out the reaction 4,4-dimethyl-5alpha-cholest-8-en-3beta-ol + 6 Fe(II)-[cytochrome b5] + 3 O2 + 5 H(+) = 4alpha-carboxy-4beta-methyl-5alpha-cholest-8-en-3beta-ol + 6 Fe(III)-[cytochrome b5] + 4 H2O. The catalysed reaction is 4alpha-methyl-5alpha-cholest-8-en-3beta-ol + 6 Fe(II)-[cytochrome b5] + 3 O2 + 5 H(+) = 4alpha-carboxy-5alpha-cholest-8-ene-3beta-ol + 6 Fe(III)-[cytochrome b5] + 4 H2O. Its pathway is steroid biosynthesis; zymosterol biosynthesis; zymosterol from lanosterol: step 3/6. It functions in the pathway steroid biosynthesis; cholesterol biosynthesis. Catalyzes the three-step monooxygenation required for the demethylation of 4,4-dimethyl and 4alpha-methylsterols, which can be subsequently metabolized to cholesterol. The protein is Methylsterol monooxygenase 1 (MSMO1) of Pongo abelii (Sumatran orangutan).